The chain runs to 371 residues: Ferrochelatase (371 aa).

Positions 218 and 299 each coordinate Fe cation.

The protein belongs to the ferrochelatase family.

The protein localises to the cytoplasm. It catalyses the reaction heme b + 2 H(+) = protoporphyrin IX + Fe(2+). Its pathway is porphyrin-containing compound metabolism; protoheme biosynthesis; protoheme from protoporphyrin-IX: step 1/1. In terms of biological role, catalyzes the ferrous insertion into protoporphyrin IX. The chain is Ferrochelatase from Cupriavidus pinatubonensis (strain JMP 134 / LMG 1197) (Cupriavidus necator (strain JMP 134)).